The primary structure comprises 1022 residues: Probable beta-galactosidase B (1022 aa).

Positions 1 to 20 are cleaved as a signal peptide; the sequence is MARFPQLLFLLLASIGLLSA. The N-linked (GlcNAc...) asparagine glycan is linked to Asn23. Tyr90 provides a ligand contact to substrate. Asn100 carries N-linked (GlcNAc...) asparagine glycosylation. Asn135, Ala136, Glu137, and Asn195 together coordinate substrate. Residue Glu196 is the Proton donor of the active site. Asn211 carries an N-linked (GlcNAc...) asparagine glycan. Tyr265 provides a ligand contact to substrate. Cys271 and Cys324 form a disulfide bridge. Glu308 acts as the Nucleophile in catalysis. Tyr373 is a binding site for substrate. Asn411, Asn456, Asn541, Asn554, Asn626, Asn777, Asn790, Asn832, Asn880, and Asn881 each carry an N-linked (GlcNAc...) asparagine glycan.

This sequence belongs to the glycosyl hydrolase 35 family.

Its subcellular location is the secreted. The catalysed reaction is Hydrolysis of terminal non-reducing beta-D-galactose residues in beta-D-galactosides.. Its function is as follows. Cleaves beta-linked terminal galactosyl residues from gangliosides, glycoproteins, and glycosaminoglycans. This Aspergillus terreus (strain NIH 2624 / FGSC A1156) protein is Probable beta-galactosidase B (lacB).